Here is a 412-residue protein sequence, read N- to C-terminus: Thyroxine-binding globulin (412 aa).

The first 16 residues, 1 to 16, serve as a signal peptide directing secretion; that stretch reads MPLFFSLVLLILGLHC. Asparagine 35, asparagine 98, asparagine 164, and asparagine 252 each carry an N-linked (GlcNAc...) asparagine glycan. 2 residues coordinate thyroxine: asparagine 292 and lysine 395.

This sequence belongs to the serpin family. Expressed by the liver and secreted in plasma.

It localises to the secreted. In terms of biological role, major thyroid hormone transport protein in serum. The sequence is that of Thyroxine-binding globulin (SERPINA7) from Ovis aries (Sheep).